The sequence spans 938 residues: MSDYKSTLNLPETGFPMRGDLAKREPGMLARWTDDDLYGIIRAAKKGKKTFILHDGPPYANGSIHIGHSVNKILKDIIVKSKGLSGYDSPYVPGWDCHGLPIELKVEQEYGKPGEKFTAAEFRAKCREYAATQVDGQRKDFIRLGVLGDWSHPYLTMDFKTEANIIRALGKIIGNGHLHKGAKPVHWCVDCRSALAEAEVEYYDKTSPSIDVAFQAVDQDALKAKFAVSNVNGPISLVIWTTTPWTLPANRAISIAPDFDYVLVQIDGQAVILAKDLVESVMQRIGVTDYTILGTVKGAELELLRFTHPFMGFDVPAILGDHVTLDAGTGAVHTAPGHGPDDYVIGQKYGLETANPVGPDGTYLPGTYPTLDGVNVFKANDIVVALLQEKGALLHVEKMQHSYPCCWRHKTPIIFRATPQWFVSMDQKGLRAQSLKEIKGVQWIPDWGQARIESMVANRPDWCISRQRTWGVPMSLFVHKDTEELHPRTLELMEEVAKRVEVDGIQAWWDLDAKEILGDEADQYVKVPDTLDVWFDSGSTHSSVVDVRPEFAGHAADMYLEGSDQHRGWFMSSLMISTAMKGKAPYRQVLTHGFTVDGQGRKMSKSIGNTVSPQDVMNKLGADILRLWVASTDYTGEMAVSDEILKRAADSYRRIRNTARFLLANLNGFDPAKDMVKPEEMVVLDRWAVGCAKAAQEDILKAYEAYDFHEVVQRLMRFCSVEMGSFYLDIIKDRQYTAKADSVARRSCQTALYHIAEALVRWMAPILSFTADEVWGYLPGEREKYVFTGEWYEGLFGLADSEAMNDAFWDELLKVRGEVNKVIEQARADKKVGGSLEAAVTLYAEPELAAKLTALGDELRFVLLTSGATVADYNDAPADAQQSEVLKGLKVALSKAEGEKCPRCWHYTQDVGKVAEHAEICGRCVSNVAGDGEKRKFA.

A 'HIGH' region motif is present at residues 58-68 (PYANGSIHIGH). At Lys183 the chain carries N6-acetyllysine. Glu561 is an L-isoleucyl-5'-AMP binding site. Positions 602 to 606 (KMSKS) match the 'KMSKS' region motif. ATP is bound at residue Lys605. Residues Cys901, Cys904, Cys921, and Cys924 each coordinate Zn(2+).

Belongs to the class-I aminoacyl-tRNA synthetase family. IleS type 1 subfamily. Monomer. Requires Zn(2+) as cofactor.

The protein resides in the cytoplasm. The catalysed reaction is tRNA(Ile) + L-isoleucine + ATP = L-isoleucyl-tRNA(Ile) + AMP + diphosphate. In terms of biological role, catalyzes the attachment of isoleucine to tRNA(Ile). As IleRS can inadvertently accommodate and process structurally similar amino acids such as valine, to avoid such errors it has two additional distinct tRNA(Ile)-dependent editing activities. One activity is designated as 'pretransfer' editing and involves the hydrolysis of activated Val-AMP. The other activity is designated 'posttransfer' editing and involves deacylation of mischarged Val-tRNA(Ile). The chain is Isoleucine--tRNA ligase from Escherichia coli O7:K1 (strain IAI39 / ExPEC).